The sequence spans 181 residues: Early E3 20.3 kDa glycoprotein (181 aa).

N-linked (GlcNAc...) asparagine; by host glycosylation is found at Asn-29, Asn-57, Asn-70, and Asn-75.

The protein belongs to the adenoviridae E3_20 family.

Its function is as follows. E3 proteins seem to be dispensable for virus growth in tissue culture cells. They are potentially important for virus growth under special conditions; E3 region may help adenoviruses to evade the immune surveillance of the host. The chain is Early E3 20.3 kDa glycoprotein from Homo sapiens (Human).